Reading from the N-terminus, the 421-residue chain is Extracellular signal-regulated kinase 1 (421 aa).

Residues 70–375 (YQILEIVGEG…VEDALKHPYL (306 aa)) form the Protein kinase domain. Residues 76 to 84 (VGEGAYGIV) and lysine 99 each bind ATP. Aspartate 194 (proton acceptor) is an active-site residue. Phosphothreonine is present on threonine 230. The TXY motif lies at 230–232 (TEY). The residue at position 232 (tyrosine 232) is a Phosphotyrosine.

It belongs to the protein kinase superfamily. CMGC Ser/Thr protein kinase family. MAP kinase subfamily. The cofactor is Mg(2+). Dually phosphorylated on Thr-230 and Tyr-232, which activates the enzyme.

The enzyme catalyses L-seryl-[protein] + ATP = O-phospho-L-seryl-[protein] + ADP + H(+). The catalysed reaction is L-threonyl-[protein] + ATP = O-phospho-L-threonyl-[protein] + ADP + H(+). Activated by tyrosine and threonine phosphorylation. The protein is Extracellular signal-regulated kinase 1 (CEK1) of Candida albicans (strain SC5314 / ATCC MYA-2876) (Yeast).